A 754-amino-acid polypeptide reads, in one-letter code: Zinc finger protein with KRAB and SCAN domains 7 (754 aa).

Residue K28 forms a Glycyl lysine isopeptide (Lys-Gly) (interchain with G-Cter in SUMO2) linkage. One can recognise an SCAN box domain in the interval 54–136 (RLHFRQLCYH…AVVEDFQRHL (83 aa)). The interval 157-215 (TALGTTKESPPTSPLSGGSAPGAHLEPPYDPGTHHLPSGDFAQCTSPVPTLPQVGNSGD) is disordered. 2 stretches are compositionally biased toward polar residues: residues 158–172 (ALGT…SPLS) and 199–215 (QCTS…NSGD). One can recognise a KRAB domain in the interval 231-306 (VAYEDLSVDY…TSGGLFGVVP (76 aa)). 10 C2H2-type zinc fingers span residues 383–405 (YRCD…QRIH), 411–433 (YECN…LRTH), 439–461 (YECS…QRLH), 467–489 (YKCN…QRTH), 495–517 (YECN…QVLH), 523–545 (YKCN…QRIH), 551–573 (YECS…QSLH), 579–601 (YKCS…ERIH), 607–629 (FECS…QRLH), and 635–657 (YKCN…QRIH). The segment at 663 to 685 (YECNECGKVFSYSSSLMVHQRTH) adopts a C2H2-type 11; degenerate zinc-finger fold. C2H2-type zinc fingers lie at residues 691–713 (YKCN…QRVH) and 719–741 (YECS…QRTH). A disordered region spans residues 735-754 (NHHQRTHTGEKSSGLAWSVS).

The protein belongs to the krueppel C2H2-type zinc-finger protein family.

Its subcellular location is the nucleus. May be involved in transcriptional regulation. This Homo sapiens (Human) protein is Zinc finger protein with KRAB and SCAN domains 7 (ZKSCAN7).